The chain runs to 471 residues: Methylenetetrahydrofolate--tRNA-(uracil-5-)-methyltransferase TrmFO (471 aa).

Position 9–14 (9–14 (GGGLSG)) interacts with FAD.

It belongs to the MnmG family. TrmFO subfamily. Requires FAD as cofactor.

Its subcellular location is the cytoplasm. The catalysed reaction is uridine(54) in tRNA + (6R)-5,10-methylene-5,6,7,8-tetrahydrofolate + NADH + H(+) = 5-methyluridine(54) in tRNA + (6S)-5,6,7,8-tetrahydrofolate + NAD(+). It carries out the reaction uridine(54) in tRNA + (6R)-5,10-methylene-5,6,7,8-tetrahydrofolate + NADPH + H(+) = 5-methyluridine(54) in tRNA + (6S)-5,6,7,8-tetrahydrofolate + NADP(+). Functionally, catalyzes the folate-dependent formation of 5-methyl-uridine at position 54 (M-5-U54) in all tRNAs. This is Methylenetetrahydrofolate--tRNA-(uracil-5-)-methyltransferase TrmFO from Beijerinckia indica subsp. indica (strain ATCC 9039 / DSM 1715 / NCIMB 8712).